A 561-amino-acid chain; its full sequence is Sensor histidine kinase BtsS (561 aa).

At 1-3 (MYD) the chain is on the cytoplasmic side. The chain crosses the membrane as a helical span at residues 4–24 (FNLVLLLLQQMCVFLVIAWLM). Residues 25–43 (SKTPLFIPLMQVTVRLPHK) are Periplasmic-facing. Residues 44-64 (FLCYIVFSIFCIMGTWFGLHI) traverse the membrane as a helical segment. The Cytoplasmic segment spans residues 65–72 (DDSIANTR). A helical transmembrane segment spans residues 73–93 (AIGAVMGGLLGGPVVGGLVGL). The Periplasmic segment spans residues 94–108 (TGGLHRYSMGGMTAL). The helical transmembrane segment at 109-129 (SCMISTIVEGLLGGLVHSILI) threads the bilayer. Residues 130 to 140 (RRGRTDKVFNP) are Cytoplasmic-facing. The chain crosses the membrane as a helical span at residues 141-161 (ITAGAVTFVAEMVQMLIILAI). The Periplasmic portion of the chain corresponds to 162 to 170 (ARPYEDAVR). A helical membrane pass occupies residues 171–191 (LVSNIAAPMMVTNTVGAALFM). The Cytoplasmic portion of the chain corresponds to 192 to 561 (RILLDKRAMF…TLRLPWRDEA (370 aa)). One can recognise a Histidine kinase domain in the interval 354 to 559 (QILAGQYERQ…RITLRLPWRD (206 aa)).

In terms of processing, autophosphorylated.

It localises to the cell inner membrane. The enzyme catalyses ATP + protein L-histidine = ADP + protein N-phospho-L-histidine.. Its function is as follows. Member of the two-component regulatory system BtsS/BtsR. BtsS is a high-affinity receptor for extracellular pyruvate that activates BtsR by phosphorylation. This chain is Sensor histidine kinase BtsS, found in Escherichia coli O6:H1 (strain CFT073 / ATCC 700928 / UPEC).